A 429-amino-acid polypeptide reads, in one-letter code: Histidinol dehydrogenase (429 aa).

NAD(+) contacts are provided by tyrosine 130, glutamine 191, and asparagine 214. The substrate site is built by serine 237, glutamine 259, and histidine 262. Glutamine 259 and histidine 262 together coordinate Zn(2+). Catalysis depends on proton acceptor residues glutamate 327 and histidine 328. The substrate site is built by histidine 328, aspartate 361, glutamate 415, and histidine 420. Residue aspartate 361 participates in Zn(2+) binding. Histidine 420 is a binding site for Zn(2+).

Belongs to the histidinol dehydrogenase family. It depends on Zn(2+) as a cofactor.

It catalyses the reaction L-histidinol + 2 NAD(+) + H2O = L-histidine + 2 NADH + 3 H(+). It functions in the pathway amino-acid biosynthesis; L-histidine biosynthesis; L-histidine from 5-phospho-alpha-D-ribose 1-diphosphate: step 9/9. Functionally, catalyzes the sequential NAD-dependent oxidations of L-histidinol to L-histidinaldehyde and then to L-histidine. This Neisseria meningitidis serogroup B (strain ATCC BAA-335 / MC58) protein is Histidinol dehydrogenase.